Here is a 200-residue protein sequence, read N- to C-terminus: 3-isopropylmalate dehydratase small subunit (200 aa).

This sequence belongs to the LeuD family. LeuD type 1 subfamily. In terms of assembly, heterodimer of LeuC and LeuD.

It catalyses the reaction (2R,3S)-3-isopropylmalate = (2S)-2-isopropylmalate. The protein operates within amino-acid biosynthesis; L-leucine biosynthesis; L-leucine from 3-methyl-2-oxobutanoate: step 2/4. Its function is as follows. Catalyzes the isomerization between 2-isopropylmalate and 3-isopropylmalate, via the formation of 2-isopropylmaleate. In Campylobacter jejuni subsp. doylei (strain ATCC BAA-1458 / RM4099 / 269.97), this protein is 3-isopropylmalate dehydratase small subunit.